We begin with the raw amino-acid sequence, 273 residues long: Transposon Tn7 transposition protein TnsA (273 aa).

Active-site residues include Glu63 and Glu73. The segment at residues 90 to 108 is a DNA-binding region (H-T-H motif); sequence TRQIAIDSGIKHPVIRGVD. Asp114 is an active-site residue. 3 residues coordinate Mg(2+): Asp114, Gln130, and Val131. Lys132 is an active-site residue.

Heteromer with TnsB. Interacts with TnsC (via C-terminus); this interaction allows TnsA to bind donor DNA. Requires Mg(2+) as cofactor. The cofactor is Mn(2+).

In terms of biological role, required for Tn7 transposition. Forms the transposase, together with TnsB. TnsA executes the 5'-DNA strand breakage reaction. TnsABC and TnsD promote high-frequency insertion of Tn7 into a specific target site known as att-Tn7 whereas TnsABC and TnsE promote low-frequency insertion into many different sites. The protein is Transposon Tn7 transposition protein TnsA of Escherichia coli.